A 121-amino-acid polypeptide reads, in one-letter code: Putative iron-sulfur cluster insertion protein ErpA (121 aa).

Iron-sulfur cluster is bound by residues Cys49, Cys113, and Cys115.

The protein belongs to the HesB/IscA family. Homodimer. It depends on iron-sulfur cluster as a cofactor.

In terms of biological role, required for insertion of 4Fe-4S clusters. This is Putative iron-sulfur cluster insertion protein ErpA from Verminephrobacter eiseniae (strain EF01-2).